A 348-amino-acid polypeptide reads, in one-letter code: MEERMITPQQLPGDQEGEVLRPHRLADYIGQTKVKDNLQIFIQAALARGEALDHVLLYGPPGLGKTTLANIIATEMEVNIRTTSGPAIERPGDLAAILTSLEPRDVLFIDEIHRLSRTTEEILYSAMEDGCLDIVIGKGPSARSIRLTLPPFTLVGATTRAGQLASPLRDRFGVISRLEFYEVEDLIRIITRAAGILNLQITLEGASEIARRSRGTPRVANRLLKRVRDYAQVWEDGRVTQELAGKSLDRLEVDPAGLDRIDQKCLLTIIQMFAGGPVGLETLSATIGEEAETIEDVVEPYLLQQGFIQRTPRGRVATVRAYQHLNIPVNSSHQEGGQGDSLFDAAED.

The segment at 1–181 (MEERMITPQQ…FGVISRLEFY (181 aa)) is large ATPase domain (RuvB-L). ATP-binding residues include Leu20, Arg21, Gly62, Lys65, Thr66, Thr67, Arg171, Tyr181, and Arg218. Position 66 (Thr66) interacts with Mg(2+). The small ATPAse domain (RuvB-S) stretch occupies residues 182 to 252 (EVEDLIRIIT…LAGKSLDRLE (71 aa)). The head domain (RuvB-H) stretch occupies residues 255 to 348 (PAGLDRIDQK…GDSLFDAAED (94 aa)). 2 residues coordinate DNA: Arg310 and Arg315. The segment at 329–348 (VNSSHQEGGQGDSLFDAAED) is disordered.

Belongs to the RuvB family. As to quaternary structure, homohexamer. Forms an RuvA(8)-RuvB(12)-Holliday junction (HJ) complex. HJ DNA is sandwiched between 2 RuvA tetramers; dsDNA enters through RuvA and exits via RuvB. An RuvB hexamer assembles on each DNA strand where it exits the tetramer. Each RuvB hexamer is contacted by two RuvA subunits (via domain III) on 2 adjacent RuvB subunits; this complex drives branch migration. In the full resolvosome a probable DNA-RuvA(4)-RuvB(12)-RuvC(2) complex forms which resolves the HJ.

Its subcellular location is the cytoplasm. The catalysed reaction is ATP + H2O = ADP + phosphate + H(+). The RuvA-RuvB-RuvC complex processes Holliday junction (HJ) DNA during genetic recombination and DNA repair, while the RuvA-RuvB complex plays an important role in the rescue of blocked DNA replication forks via replication fork reversal (RFR). RuvA specifically binds to HJ cruciform DNA, conferring on it an open structure. The RuvB hexamer acts as an ATP-dependent pump, pulling dsDNA into and through the RuvAB complex. RuvB forms 2 homohexamers on either side of HJ DNA bound by 1 or 2 RuvA tetramers; 4 subunits per hexamer contact DNA at a time. Coordinated motions by a converter formed by DNA-disengaged RuvB subunits stimulates ATP hydrolysis and nucleotide exchange. Immobilization of the converter enables RuvB to convert the ATP-contained energy into a lever motion, pulling 2 nucleotides of DNA out of the RuvA tetramer per ATP hydrolyzed, thus driving DNA branch migration. The RuvB motors rotate together with the DNA substrate, which together with the progressing nucleotide cycle form the mechanistic basis for DNA recombination by continuous HJ branch migration. Branch migration allows RuvC to scan DNA until it finds its consensus sequence, where it cleaves and resolves cruciform DNA. In Desulfitobacterium hafniense (strain DSM 10664 / DCB-2), this protein is Holliday junction branch migration complex subunit RuvB.